Consider the following 102-residue polypeptide: uncharacterized protein (102 aa).

The disordered stretch occupies residues 77-102 (RKDGDEKSKPNSKDYASRPIRDHSKI).

This is an uncharacterized protein from Microplitis demolitor (Parasitoid wasp).